Consider the following 33-residue polypeptide: Cytochrome c oxidase subunit 5B liver, mitochondrial (33 aa).

It belongs to the cytochrome c oxidase subunit 5B family. Component of the cytochrome c oxidase (complex IV, CIV), a multisubunit enzyme composed of 14 subunits. The complex is composed of a catalytic core of 3 subunits MT-CO1, MT-CO2 and MT-CO3, encoded in the mitochondrial DNA, and 11 supernumerary subunits COX4I, COX5A, COX5B, COX6A, COX6B, COX6C, COX7A, COX7B, COX7C, COX8 and NDUFA4, which are encoded in the nuclear genome. The complex exists as a monomer or a dimer and forms supercomplexes (SCs) in the inner mitochondrial membrane with NADH-ubiquinone oxidoreductase (complex I, CI) and ubiquinol-cytochrome c oxidoreductase (cytochrome b-c1 complex, complex III, CIII), resulting in different assemblies (supercomplex SCI(1)III(2)IV(1) and megacomplex MCI(2)III(2)IV(2)).

Its subcellular location is the mitochondrion inner membrane. Its pathway is energy metabolism; oxidative phosphorylation. In terms of biological role, component of the cytochrome c oxidase, the last enzyme in the mitochondrial electron transport chain which drives oxidative phosphorylation. The respiratory chain contains 3 multisubunit complexes succinate dehydrogenase (complex II, CII), ubiquinol-cytochrome c oxidoreductase (cytochrome b-c1 complex, complex III, CIII) and cytochrome c oxidase (complex IV, CIV), that cooperate to transfer electrons derived from NADH and succinate to molecular oxygen, creating an electrochemical gradient over the inner membrane that drives transmembrane transport and the ATP synthase. Cytochrome c oxidase is the component of the respiratory chain that catalyzes the reduction of oxygen to water. Electrons originating from reduced cytochrome c in the intermembrane space (IMS) are transferred via the dinuclear copper A center (CU(A)) of subunit 2 and heme A of subunit 1 to the active site in subunit 1, a binuclear center (BNC) formed by heme A3 and copper B (CU(B)). The BNC reduces molecular oxygen to 2 water molecules using 4 electrons from cytochrome c in the IMS and 4 protons from the mitochondrial matrix. The chain is Cytochrome c oxidase subunit 5B liver, mitochondrial from Oncorhynchus mykiss (Rainbow trout).